We begin with the raw amino-acid sequence, 164 residues long: 2-C-methyl-D-erythritol 2,4-cyclodiphosphate synthase (164 aa).

2 residues coordinate a divalent metal cation: aspartate 8 and histidine 10. Residues 8-10 (DVH) and 34-35 (HS) contribute to the 4-CDP-2-C-methyl-D-erythritol 2-phosphate site. Histidine 42 lines the a divalent metal cation pocket. Residues 56–58 (DIG), 132–135 (TTEE), phenylalanine 139, and lysine 142 each bind 4-CDP-2-C-methyl-D-erythritol 2-phosphate.

This sequence belongs to the IspF family. As to quaternary structure, homotrimer. It depends on a divalent metal cation as a cofactor.

The enzyme catalyses 4-CDP-2-C-methyl-D-erythritol 2-phosphate = 2-C-methyl-D-erythritol 2,4-cyclic diphosphate + CMP. It participates in isoprenoid biosynthesis; isopentenyl diphosphate biosynthesis via DXP pathway; isopentenyl diphosphate from 1-deoxy-D-xylulose 5-phosphate: step 4/6. Its function is as follows. Involved in the biosynthesis of isopentenyl diphosphate (IPP) and dimethylallyl diphosphate (DMAPP), two major building blocks of isoprenoid compounds. Catalyzes the conversion of 4-diphosphocytidyl-2-C-methyl-D-erythritol 2-phosphate (CDP-ME2P) to 2-C-methyl-D-erythritol 2,4-cyclodiphosphate (ME-CPP) with a corresponding release of cytidine 5-monophosphate (CMP). This chain is 2-C-methyl-D-erythritol 2,4-cyclodiphosphate synthase, found in Clostridium kluyveri (strain NBRC 12016).